The sequence spans 320 residues: Aspartate carbamoyltransferase catalytic subunit (320 aa).

Residues arginine 68 and threonine 69 each coordinate carbamoyl phosphate. Position 96 (lysine 96) interacts with L-aspartate. Positions 118, 148, and 151 each coordinate carbamoyl phosphate. Residues arginine 181 and arginine 236 each contribute to the L-aspartate site. Residues glycine 277 and proline 278 each coordinate carbamoyl phosphate.

Belongs to the aspartate/ornithine carbamoyltransferase superfamily. ATCase family. As to quaternary structure, heterododecamer (2C3:3R2) of six catalytic PyrB chains organized as two trimers (C3), and six regulatory PyrI chains organized as three dimers (R2).

It catalyses the reaction carbamoyl phosphate + L-aspartate = N-carbamoyl-L-aspartate + phosphate + H(+). It participates in pyrimidine metabolism; UMP biosynthesis via de novo pathway; (S)-dihydroorotate from bicarbonate: step 2/3. In terms of biological role, catalyzes the condensation of carbamoyl phosphate and aspartate to form carbamoyl aspartate and inorganic phosphate, the committed step in the de novo pyrimidine nucleotide biosynthesis pathway. This Leptothrix cholodnii (strain ATCC 51168 / LMG 8142 / SP-6) (Leptothrix discophora (strain SP-6)) protein is Aspartate carbamoyltransferase catalytic subunit.